The sequence spans 111 residues: Photosystem II reaction center Psb28 protein (111 aa).

It belongs to the Psb28 family. Part of the photosystem II complex.

The protein localises to the cellular thylakoid membrane. The sequence is that of Photosystem II reaction center Psb28 protein from Acaryochloris marina (strain MBIC 11017).